A 402-amino-acid chain; its full sequence is Pyridinium-3,5-bisthiocarboxylic acid mononucleotide nickel insertion protein (402 aa).

It belongs to the LarC family.

It catalyses the reaction Ni(II)-pyridinium-3,5-bisthiocarboxylate mononucleotide = pyridinium-3,5-bisthiocarboxylate mononucleotide + Ni(2+). In terms of biological role, involved in the biosynthesis of a nickel-pincer cofactor ((SCS)Ni(II) pincer complex). Binds Ni(2+), and functions in nickel delivery to pyridinium-3,5-bisthiocarboxylic acid mononucleotide (P2TMN), to form the mature cofactor. Is thus probably required for the activation of nickel-pincer cofactor-dependent enzymes. The chain is Pyridinium-3,5-bisthiocarboxylic acid mononucleotide nickel insertion protein from Desulfitobacterium hafniense (strain Y51).